Reading from the N-terminus, the 1004-residue chain is 2-oxoglutarate dehydrogenase E1 component (1004 aa).

This sequence belongs to the alpha-ketoglutarate dehydrogenase family. As to quaternary structure, homodimer. Part of the 2-oxoglutarate dehydrogenase (OGDH) complex composed of E1 (2-oxoglutarate dehydrogenase), E2 (dihydrolipoamide succinyltransferase) and E3 (dihydrolipoamide dehydrogenase); the complex contains multiple copies of the three enzymatic components (E1, E2 and E3). Thiamine diphosphate serves as cofactor.

It carries out the reaction N(6)-[(R)-lipoyl]-L-lysyl-[protein] + 2-oxoglutarate + H(+) = N(6)-[(R)-S(8)-succinyldihydrolipoyl]-L-lysyl-[protein] + CO2. Its function is as follows. E1 component of the 2-oxoglutarate dehydrogenase (OGDH) complex which catalyzes the decarboxylation of 2-oxoglutarate, the first step in the conversion of 2-oxoglutarate to succinyl-CoA and CO(2). The protein is 2-oxoglutarate dehydrogenase E1 component of Brucella abortus (strain S19).